The chain runs to 1210 residues: MGPEMRLTRICCCCCLLYQLGFLSHGTTSGLQLTPDLEEWEVVFPALWRRESLNATGLSGGSSDPGSGRSSGGGGRGQASGSSREVRSVARAPQEEATRGQSEPWFGSPLEPGAEDEEELESQELPRGSSGDTALSSGTPASWQPPLPPQRPSSPPPAQQEEPSAEEVLLRIPALSRDLYLLLRRDGRFLAQRFAVEQWPKPGPDPTRATADPGSSLLPDASCFYTGTVLRHPGSLASFSTCGGGLMGFIQLNEDFLFIEPFNDTMAIIGHPHRLYRQKRSTEEKVTENSAVHRHHCGVISDKGRPRSKKIADNRREKRYSYKLSQEYNIETVVVADPAMVSYHGADAARRFILTILNMVFNLFQHKSLGVQVNLRVLKLILLHETPADLYIGHHGEKMLESFCKWQHEEFGRRNDVHLEMSTSWGEDIAAVDAAILITRKDFCVHKDEPCDTVGIAYLNGMCSEKRKCIIAEDNGLNLAFTIAHEMGHNMGINHDNDHPSCADGLHIMSGEWIKGQNLGDVSWSRCSKEDLERFLRSKASSCLLHTDPQSLSSVLVPSKLPGMAYTADEQCQILFGPLASFCQEMQHVICTGLWCKVEGEAECRTKLDPPMDGTDCDPGKWCKAGECTRRTPAPEHLAGEWSPWSSCSRSCSSGVSSRERKCPGLGSEARDCNGPRKQYRICENPPCPAGLPGFRDWQCQAYSVRTSYPKHALQWQAVFDEEKPCALFCSPVGKEQPVLLSEKVMDGTSCGYQGLDICANGRCQKAGCDGLLGSLAREDHCGVCNGNGKSCKVIKGDFNHTRGAGYVEVLVIPAGARRIKVVEEKPAHSFLALRDASKQSINSDWKIEHSGAFSLAGTTVHYLRRGLWEKISAKGPTTTPLHLLVLLFQDQNYGLHYEYTVPSDPLPDNQSSKEPGPLFMWTHAGWGDCNATCGGGERKTMVSCTKIMSKNISLVDNKKCKDLTKPEPQIRKCNEQPCQTRWMMTEWTTCSRTCGKGVQSRQVACTQQLENGTLIRAWERDCLGPKPATVQRCEGQDCMTVWEAGVWSECSVKCGKGVRHRTVRCTNPRKKCVLSTRPREAEDCEDYSKCYVWRVGDWSKCSITCGKGMQSRVIQCMHKITGRHGNECFSSEKPAAYRPCHLQPCNEKINVNTITSPRLAALTFKCLGDQWPVYCRVIREKNLCQDMRWYQRCCETCRDFYAQKLQQKS.

A signal peptide spans 1–30; sequence MGPEMRLTRICCCCCLLYQLGFLSHGTTSG. Positions 31–319 are excised as a propeptide; sequence LQLTPDLEEW…KIADNRREKR (289 aa). An N-linked (GlcNAc...) asparagine glycan is attached at Asn54. The segment at 55–166 is disordered; that stretch reads ATGLSGGSSD…PAQQEEPSAE (112 aa). Residues 69 to 78 show a composition bias toward gly residues; it reads RSSGGGGRGQ. A compositionally biased stretch (basic and acidic residues) spans 84–98; that stretch reads REVRSVARAPQEEAT. The span at 113 to 122 shows a compositional bias: acidic residues; it reads GAEDEEELES. Residues 130-139 show a composition bias toward polar residues; that stretch reads SGDTALSSGT. The segment covering 143 to 158 has biased composition (pro residues); sequence WQPPLPPQRPSSPPPA. Asn263 is a glycosylation site (N-linked (GlcNAc...) asparagine). The Cysteine switch signature appears at 295–302; it reads HHCGVISD. A Zn(2+)-binding site is contributed by Cys297. The Peptidase M12B domain maps to 328–548; the sequence is YNIETVVVAD…KASSCLLHTD (221 aa). 11 disulfides stabilise this stretch: Cys404–Cys469, Cys444–Cys451, Cys463–Cys543, Cys502–Cys527, Cys572–Cys596, Cys583–Cys604, Cys591–Cys623, Cys617–Cys628, Cys648–Cys683, Cys652–Cys688, and Cys663–Cys673. His485 is a Zn(2+) binding site. Glu486 is an active-site residue. Residues His489 and His495 each contribute to the Zn(2+) site. The Disintegrin domain maps to 549-636; the sequence is PQSLSSVLVP…ECTRRTPAPE (88 aa). In terms of domain architecture, TSP type-1 1 spans 637 to 689; it reads HLAGEWSPWSSCSRSCSSGVSSRERKCPGLGSEARDCNGPRKQYRICENPPCP. The segment at 794-917 is spacer; it reads VIKGDFNHTR…PDNQSSKEPG (124 aa). Residues Asn800, Asn910, Asn931, Asn952, and Asn1012 are each glycosylated (N-linked (GlcNAc...) asparagine). 4 consecutive TSP type-1 domains span residues 918-978, 979-1040, 1042-1086, and 1090-1147; these read PLFM…NEQP, CQTR…QDCM, VWEA…EDCE, and KCYV…QPCN. 3 disulfide bridges follow: Cys991/Cys1034, Cys995/Cys1039, and Cys1006/Cys1023. Residues 1163-1202 enclose the PLAC domain; the sequence is LTFKCLGDQWPVYCRVIREKNLCQDMRWYQRCCETCRDFY.

Zn(2+) serves as cofactor. The precursor is cleaved by a furin endopeptidase. Post-translationally, glycosylated. Can be O-fucosylated by POFUT2 on a serine or a threonine residue found within the consensus sequence C1-X(2)-(S/T)-C2-G of the TSP type-1 repeat domains where C1 and C2 are the first and second cysteine residue of the repeat, respectively. Fucosylated repeats can then be further glycosylated by the addition of a beta-1,3-glucose residue by the glucosyltransferase, B3GALTL. Fucosylation mediates the efficient secretion of ADAMTS family members. Can also be C-glycosylated with one or two mannose molecules on tryptophan residues within the consensus sequence W-X-X-W of the TPRs, and N-glycosylated. These other glycosylations can also facilitate secretion. In terms of tissue distribution, expressed predominantly in fetal ovary, low levels of expression is also detected in kidney, heart, skeletal muscle, lung and testis.

It is found in the secreted. It localises to the extracellular space. The protein localises to the extracellular matrix. The chain is A disintegrin and metalloproteinase with thrombospondin motifs 19 (Adamts19) from Mus musculus (Mouse).